Here is a 93-residue protein sequence, read N- to C-terminus: MAKTASPGATPPGNGAEPLPDNYETALAELETLVARMEGGALSLEDSLAAYRRGAALVAFCQQQLEKVEQQVRVLDGATLKPAAATDGEDDDL.

Positions 1-22 are disordered; that stretch reads MAKTASPGATPPGNGAEPLPDN.

Belongs to the XseB family. As to quaternary structure, heterooligomer composed of large and small subunits.

The protein localises to the cytoplasm. It catalyses the reaction Exonucleolytic cleavage in either 5'- to 3'- or 3'- to 5'-direction to yield nucleoside 5'-phosphates.. Its function is as follows. Bidirectionally degrades single-stranded DNA into large acid-insoluble oligonucleotides, which are then degraded further into small acid-soluble oligonucleotides. The polypeptide is Exodeoxyribonuclease 7 small subunit (Burkholderia multivorans (strain ATCC 17616 / 249)).